The primary structure comprises 530 residues: MKQEGSARRRGADKAKPPPGGEQEPPPPAPQDVEMKEEAAAGSGSTGEGDGKAAATEHSQRELDTVTLEDIKEHVRQLEKAVSGKEPRFVLRALRMLPSTSRRLNHYVLYKAVHGFFTSNNATRDFLLPFLEEPMDTEADLQFRPRTGKAASAPLLPEVEAYLQLLMVIFLMNSKRYKEAQKISDDLMQKISTQNRRALDLVAAKCYYYHARVYEFLDKLDVVRSFLHARLRTATLRHDADGQATLLNLLLRNYLHYSLYDQAEKLVSKSVFPEQANNNEWARYLYYTGRIKAIQLEYSEARRTMTNALRKAPQHTAVGFKQTVHKLLIVVELLLGEIPDRLQFRQPSLKRSLMPYFLLTQAVRTGNLAKFNQVLDQFGEKFQTDGTYTLIIRLRHNVIKTGVRMISLSYSRISLADIAQKLQLDSPEDAEFIVAKAIRDGVIEASINHEKGYVQSKEMIDIYSTREPQLAFHQRISFCLDIHNMSVKAMRFPPKSYNKDLESAEERREREQQDLEFAKEMAEDDDDSFP.

Residues 1 to 16 (MKQEGSARRRGADKAK) show a composition bias toward basic and acidic residues. The interval 1–65 (MKQEGSARRR…TEHSQRELDT (65 aa)) is disordered. Residues 17–30 (PPPGGEQEPPPPAP) show a composition bias toward pro residues. A Glycyl lysine isopeptide (Lys-Gly) (interchain with G-Cter in SUMO1); alternate cross-link involves residue K36. K36 is covalently cross-linked (Glycyl lysine isopeptide (Lys-Gly) (interchain with G-Cter in SUMO2); alternate). A PCI domain is found at 282–461 (ARYLYYTGRI…GYVQSKEMID (180 aa)). Phosphoserine occurs at positions 414 and 426. The segment at 496-530 (SYNKDLESAEERREREQQDLEFAKEMAEDDDDSFP) is disordered. A compositionally biased stretch (basic and acidic residues) spans 497–521 (YNKDLESAEERREREQQDLEFAKEM).

This sequence belongs to the proteasome subunit S3 family. As to quaternary structure, component of the 19S proteasome regulatory particle complex. The 26S proteasome consists of a 20S core particle (CP) and two 19S regulatory subunits (RP). The regulatory particle is made of a lid composed of 9 subunits including PSMD3, a base containing 6 ATPases and few additional components. Interacts with UBQLN1 (via ubiquitin-like domain). Interacts with ERCC6.

Its function is as follows. Component of the 26S proteasome, a multiprotein complex involved in the ATP-dependent degradation of ubiquitinated proteins. This complex plays a key role in the maintenance of protein homeostasis by removing misfolded or damaged proteins, which could impair cellular functions, and by removing proteins whose functions are no longer required. Therefore, the proteasome participates in numerous cellular processes, including cell cycle progression, apoptosis, or DNA damage repair. The chain is 26S proteasome non-ATPase regulatory subunit 3 (Psmd3) from Mus musculus (Mouse).